The sequence spans 646 residues: Lipoteichoic acid synthase (646 aa).

Residues 1–7 (MKLHKKK) are Cytoplasmic-facing. A helical membrane pass occupies residues 8-28 (LTLFAFFILTVLTVTLKTYFS). Over 29-43 (YYVDFSLGVKGLVQN) the chain is Extracellular. A helical transmembrane segment spans residues 44 to 64 (LILLMNPYSLIALVLSIFLFF). The Cytoplasmic segment spans residues 65-68 (KGKK). A helical transmembrane segment spans residues 69–89 (AFWFIFIGGFILTFLLYANVV). Topologically, residues 90-119 (YFRFFSDFLTFSTLNQAGNVESMGGAVTAS) are extracellular. Residues 120-140 (FKWYDFVYFIDTIIYLFVLIF) form a helical membrane-spanning segment. The Cytoplasmic segment spans residues 141–153 (KQKWLDKRVFSKK). Residues 154-174 (FVPVVMAASIALFFLNLAFAE) traverse the membrane as a helical segment. At 175–646 (SDRPELLTRT…KTGPKGQERK (472 aa)) the chain is on the extracellular side. E255 and T300 together coordinate Mn(2+). The active site involves T300. Substrate is bound at residue H416. Mn(2+)-binding residues include D475 and H476. The segment at 579 to 646 (IYDNKNNEPM…KTGPKGQERK (68 aa)) is disordered. 2 stretches are compositionally biased toward basic and acidic residues: residues 580–607 (YDNK…KDLQ) and 625–646 (DFDK…QERK).

The protein belongs to the LTA synthase family. Proteolytically cleaved.

The protein resides in the cell membrane. It is found in the secreted. It participates in cell wall biogenesis; lipoteichoic acid biosynthesis. Its function is as follows. Catalyzes the polymerization of lipoteichoic acid (LTA) polyglycerol phosphate, a reaction that presumably uses phosphatidylglycerol (PG) as substrate. Is required for staphylococcal growth and cell division process. In Staphylococcus saprophyticus subsp. saprophyticus (strain ATCC 15305 / DSM 20229 / NCIMB 8711 / NCTC 7292 / S-41), this protein is Lipoteichoic acid synthase (ltaS).